The following is a 355-amino-acid chain: Magnesium-chelatase subunit ChlI (355 aa).

Gly46–Ser53 provides a ligand contact to ATP. An intrachain disulfide couples Cys281 to Cys323.

The protein belongs to the Mg-chelatase subunits D/I family. In terms of assembly, the magnesium chelatase complex is a heterotrimer consisting of subunits CHLI, CHLD and CHLH.

It is found in the plastid. It localises to the chloroplast. It catalyses the reaction protoporphyrin IX + Mg(2+) + ATP + H2O = Mg-protoporphyrin IX + ADP + phosphate + 3 H(+). It participates in porphyrin-containing compound metabolism; chlorophyll biosynthesis. Its activity is regulated as follows. Redox regulation; active in reducing conditions, inactive in oxidizing conditions. Thioredoxins f and m mediate the reversible reductive activation of oxidized CHLI. Involved in chlorophyll biosynthesis. Catalyzes the insertion of magnesium ion into protoporphyrin IX to yield Mg-protoporphyrin IX. The magnesium-chelatase is a complex of three subunits, CHLI, CHLD and CHLH. The reaction takes place in two steps, with an ATP-dependent activation followed by an ATP-dependent chelation step. This is Magnesium-chelatase subunit ChlI (chlI) from Nephroselmis olivacea (Green alga).